A 125-amino-acid polypeptide reads, in one-letter code: uncharacterized protein (125 aa).

The helical transmembrane segment at 21–43 (KFSLIALVSFTALAIIVLYHNIS) threads the bilayer.

The protein resides in the membrane. This is an uncharacterized protein from Archaeoglobus fulgidus (strain ATCC 49558 / DSM 4304 / JCM 9628 / NBRC 100126 / VC-16).